The following is a 123-amino-acid chain: Protein Wnt-3a (123 aa).

Ser-1 is lipidated: O-palmitoleoyl serine. The cysteines at positions 89 and 104 are disulfide-linked. A glycan (N-linked (GlcNAc...) asparagine) is linked at Asn-90.

The protein belongs to the Wnt family. Post-translationally, disulfide bonds have critical and distinct roles in secretion and activity. Loss of each conserved cysteine results in high molecular weight oxidized Wnt oligomers, which are formed through inter-Wnt disulfide bonding. In terms of processing, palmitoleoylation is required for efficient binding to frizzled receptors. Depalmitoleoylation leads to Wnt signaling pathway inhibition.

It is found in the secreted. The protein localises to the extracellular space. The protein resides in the extracellular matrix. Functionally, ligand for members of the frizzled family of seven transmembrane receptors. Functions in the canonical Wnt signaling pathway that results in activation of transcription factors of the TCF/LEF family. Required for normal embryonic mesoderm development and formation of caudal somites. Required for normal morphogenesis of the developing neural tube. The sequence is that of Protein Wnt-3a (WNT-3A) from Plethodon jordani (Red-cheeked salamander).